We begin with the raw amino-acid sequence, 397 residues long: Probable protein phosphatase 2C 74 (397 aa).

A PPM-type phosphatase domain is found at 133–391; it reads GFWVASRRGL…DDVTVMVVDL (259 aa). The Mn(2+) site is built by Asp-170, Gly-171, Asp-343, and Asp-382.

It belongs to the PP2C family. Requires Mg(2+) as cofactor. Mn(2+) is required as a cofactor.

It catalyses the reaction O-phospho-L-seryl-[protein] + H2O = L-seryl-[protein] + phosphate. The enzyme catalyses O-phospho-L-threonyl-[protein] + H2O = L-threonyl-[protein] + phosphate. The polypeptide is Probable protein phosphatase 2C 74 (Oryza sativa subsp. japonica (Rice)).